We begin with the raw amino-acid sequence, 273 residues long: Protein B4 (273 aa).

Positions 1 to 24 are disordered; it reads MAPKKAVAAPEGGNKENAAVKGSS. An H15 domain is found at 40 to 118; the sequence is SHPPTLSMVV…GATGRFKLAK (79 aa). Residues 120-273 are disordered; sequence VKTTKAGKEN…AGKKGKKVTN (154 aa). Positions 154-256 are enriched in basic and acidic residues; it reads AKTEKEPKGE…KDVKAQKDST (103 aa). 3 repeat units span residues 189 to 198, 199 to 208, and 209 to 217. Residues 189-217 are 3 X 10 AA tandem repeats; sequence KEAKEVDKANKEAKEVDKANKEAKEVDKA. Residues 264-273 are compositionally biased toward basic residues; it reads AGKKGKKVTN.

Belongs to the histone H1/H5 family. In terms of assembly, interacts with nap1l1.

Its subcellular location is the nucleus. It localises to the chromosome. The protein is Protein B4 (b4) of Xenopus laevis (African clawed frog).